A 796-amino-acid chain; its full sequence is Polyribonucleotide nucleotidyltransferase (796 aa).

Mg(2+) is bound by residues Asp490 and Asp496. The KH domain occupies 557–616; the sequence is PRIESIFINKDKIRNVIGSGGKNIRDICEKTGAKIEIIQDGTVMIYAVNNEAVEYAKSMI. The S1 motif domain maps to 626–693; sequence GKVFEGTVVE…DREHVQLSMR (68 aa). A compositionally biased stretch (low complexity) spans 714–736; the sequence is SFSDDSSSSGTSSSGSSFKESYS. The disordered stretch occupies residues 714-796; it reads SFSDDSSSSG…HEVPRKPRFF (83 aa). The segment covering 740–755 has biased composition (basic residues); sequence HGSHEKRRSGGSRSSR. Residues 771 to 784 show a composition bias toward low complexity; sequence SDFGNNNRSFSNSR. Residues 785–796 show a composition bias toward basic and acidic residues; it reads NGHEVPRKPRFF.

This sequence belongs to the polyribonucleotide nucleotidyltransferase family. Requires Mg(2+) as cofactor.

Its subcellular location is the cytoplasm. It catalyses the reaction RNA(n+1) + phosphate = RNA(n) + a ribonucleoside 5'-diphosphate. In terms of biological role, involved in mRNA degradation. Catalyzes the phosphorolysis of single-stranded polyribonucleotides processively in the 3'- to 5'-direction. The chain is Polyribonucleotide nucleotidyltransferase from Ehrlichia canis (strain Jake).